The sequence spans 241 residues: DNA repair protein RecO (241 aa).

Belongs to the RecO family.

In terms of biological role, involved in DNA repair and RecF pathway recombination. This is DNA repair protein RecO from Azobacteroides pseudotrichonymphae genomovar. CFP2.